Consider the following 435-residue polypeptide: Glutamyl-tRNA reductase (435 aa).

Substrate is bound by residues 49–52 (TCNR), S109, 114–116 (EGQ), and Q120. C50 functions as the Nucleophile in the catalytic mechanism. 198 to 203 (GAGRMS) provides a ligand contact to NADP(+).

The protein belongs to the glutamyl-tRNA reductase family. Homodimer.

It carries out the reaction (S)-4-amino-5-oxopentanoate + tRNA(Glu) + NADP(+) = L-glutamyl-tRNA(Glu) + NADPH + H(+). The protein operates within porphyrin-containing compound metabolism; protoporphyrin-IX biosynthesis; 5-aminolevulinate from L-glutamyl-tRNA(Glu): step 1/2. It participates in porphyrin-containing compound metabolism; chlorophyll biosynthesis. Its function is as follows. Catalyzes the NADPH-dependent reduction of glutamyl-tRNA(Glu) to glutamate 1-semialdehyde (GSA). This is Glutamyl-tRNA reductase from Prochlorococcus marinus (strain MIT 9515).